A 456-amino-acid polypeptide reads, in one-letter code: Bifunctional protein GlmU (456 aa).

Residues 1 to 229 (MLNNAMSVVI…LSEVEGVNNR (229 aa)) are pyrophosphorylase. Residues 11–14 (LAAG), Lys25, Gln76, 81–82 (GT), 103–105 (YGD), Gly140, Glu154, Asn169, and Asn227 contribute to the UDP-N-acetyl-alpha-D-glucosamine site. Asp105 is a Mg(2+) binding site. Asn227 serves as a coordination point for Mg(2+). Positions 230 to 250 (LQLSRLERVYQSEQAEKLLLA) are linker. Residues 251-456 (GVMLRDPARF…EGWRRPVKKK (206 aa)) are N-acetyltransferase. 2 residues coordinate UDP-N-acetyl-alpha-D-glucosamine: Arg333 and Lys351. His363 functions as the Proton acceptor in the catalytic mechanism. Residues Tyr366 and Asn377 each coordinate UDP-N-acetyl-alpha-D-glucosamine. Acetyl-CoA-binding positions include Ala380, 386-387 (NY), Ser405, Ala423, and Arg440.

In the N-terminal section; belongs to the N-acetylglucosamine-1-phosphate uridyltransferase family. It in the C-terminal section; belongs to the transferase hexapeptide repeat family. In terms of assembly, homotrimer. Mg(2+) is required as a cofactor.

The protein resides in the cytoplasm. The catalysed reaction is alpha-D-glucosamine 1-phosphate + acetyl-CoA = N-acetyl-alpha-D-glucosamine 1-phosphate + CoA + H(+). The enzyme catalyses N-acetyl-alpha-D-glucosamine 1-phosphate + UTP + H(+) = UDP-N-acetyl-alpha-D-glucosamine + diphosphate. It functions in the pathway nucleotide-sugar biosynthesis; UDP-N-acetyl-alpha-D-glucosamine biosynthesis; N-acetyl-alpha-D-glucosamine 1-phosphate from alpha-D-glucosamine 6-phosphate (route II): step 2/2. Its pathway is nucleotide-sugar biosynthesis; UDP-N-acetyl-alpha-D-glucosamine biosynthesis; UDP-N-acetyl-alpha-D-glucosamine from N-acetyl-alpha-D-glucosamine 1-phosphate: step 1/1. The protein operates within bacterial outer membrane biogenesis; LPS lipid A biosynthesis. In terms of biological role, catalyzes the last two sequential reactions in the de novo biosynthetic pathway for UDP-N-acetylglucosamine (UDP-GlcNAc). The C-terminal domain catalyzes the transfer of acetyl group from acetyl coenzyme A to glucosamine-1-phosphate (GlcN-1-P) to produce N-acetylglucosamine-1-phosphate (GlcNAc-1-P), which is converted into UDP-GlcNAc by the transfer of uridine 5-monophosphate (from uridine 5-triphosphate), a reaction catalyzed by the N-terminal domain. This Escherichia coli O127:H6 (strain E2348/69 / EPEC) protein is Bifunctional protein GlmU.